Reading from the N-terminus, the 619-residue chain is MRFRHKAAALAATLALPLAGLVGLASPAQAATSATATFAKTSDWGTGFGGSWTVKNTGTTSLSSWTVEWDFPTGTKVTSAWDATVTNSGDHWTAKNVGWNGTLAPGASVSFGFNGSGPGSPSNCKLNGGSCDGTSVPGDAAPSAPGTPTASNITDTSVKLSWSAATDDKGVKNYDVLRDGAKVATVTGTTYTDNGLTKGTAYSYSVKARDTADQTGPASGAVKVTTTGGGDGGNPGTGAEVKMGYFTNWGVYGRNYHVKNLVTSGSADKITHINYAFGNVQGGKCTIGDSYADYDKAYTADQSVDGVADTWDQPLRGNFNQLRKLKAKYPNIKILYSFGGWTWSGGFPDAVKNPAAFAKSCHDLVEDPRWADVFDGIDLDWEYPNACGLSCDETSAPNAFSSMMKAMRAEFGQDYLITAAVTADGSDGGKIDAADYGEASKYIDWYNVMTYDFFGAWAKNGPTAPHSPLTAYDGIPQQGFNTADAMAKFKSKGVPADKLLIGIGFYGRGWTGVTQSAPGGTATGPATGTYEAGIEDYKVLKNSCPATGTIAGTAYAHCGSNWWSYDTPATIKSKMDWAEQQGLGGAFFWEFSGDTANGDWWRHRQRPQVTPAVRTTRRH.

The N-terminal stretch at 1 to 30 (MRFRHKAAALAATLALPLAGLVGLASPAQA) is a signal peptide. Residues 31–134 (ATSATATFAK…KLNGGSCDGT (104 aa)) enclose the CBM2 domain. Positions 144–229 (APGTPTASNI…GAVKVTTTGG (86 aa)) constitute a Fibronectin type-III domain. Positions 212–236 (ADQTGPASGAVKVTTTGGGDGGNPG) are disordered. Over residues 227–236 (TGGGDGGNPG) the composition is skewed to gly residues. A GH18 domain is found at 240–619 (EVKMGYFTNW…TPAVRTTRRH (380 aa)). Chitin contacts are provided by residues 312–313 (DQ) and 339–342 (GGWT). The active-site Proton donor is Glu382. Chitin-binding positions include Tyr383, 449–452 (MTYD), and Trp589.

This sequence belongs to the glycosyl hydrolase 18 family. Chitinase class II subfamily.

It carries out the reaction Random endo-hydrolysis of N-acetyl-beta-D-glucosaminide (1-&gt;4)-beta-linkages in chitin and chitodextrins.. This chain is Chitinase C (chiC), found in Streptomyces lividans.